The chain runs to 317 residues: Melanocyte-stimulating hormone receptor (317 aa).

Topologically, residues 1 to 37 (MPVLGSQRRLLGSLNCTPPATFPLTLAPNRTGPQCLE) are extracellular. N-linked (GlcNAc...) asparagine glycosylation is present at N29. Residues 38–63 (VAIPDGLFLSLGLVSLVENVLVVAAI) form a helical membrane-spanning segment. Residues 64–72 (AKNRNLQSP) lie on the Cytoplasmic side of the membrane. A helical membrane pass occupies residues 73-93 (MYYFICCLAMSDLLVSVSNVL). Topologically, residues 94–118 (ETAVMLLLEAGALAARAAVVQQLDN) are extracellular. Residues 119 to 140 (VIDVLICGSMVSSLCFLGAIAV) traverse the membrane as a helical segment. The Cytoplasmic portion of the chain corresponds to 141-163 (DRYISIFYALRYHSVVTLPRAWR). Residues 164-183 (IIAAIWVASILTSLLFITYY) traverse the membrane as a helical segment. Over 184 to 191 (NHTVVLLC) the chain is Extracellular. The helical transmembrane segment at 192 to 211 (LVGFFIAMLALMAVLYVHML) threads the bilayer. The Cytoplasmic portion of the chain corresponds to 212–240 (ARACQHARGIARLQKRQRPIHQGFGLKGA). A helical transmembrane segment spans residues 241–266 (ATLTILLGVFFLCWGPFFLHLSLIVL). At 267-279 (CPQHPTCGCIFKN) the chain is on the extracellular side. Residues 280–300 (FNLFLALIICNAIVDPLIYAF) traverse the membrane as a helical segment. Over 301 to 317 (RSQELRKTLQEVLQCSW) the chain is Cytoplasmic. C315 carries S-palmitoyl cysteine lipidation.

It belongs to the G-protein coupled receptor 1 family. In terms of assembly, interacts with MGRN1, but does not undergo MGRN1-mediated ubiquitination; this interaction competes with GNAS-binding and thus inhibits agonist-induced cAMP production. Interacts with OPN3; the interaction results in a decrease in MC1R-mediated cAMP signaling and ultimately a decrease in melanin production in melanocytes.

The protein localises to the cell membrane. In terms of biological role, receptor for MSH (alpha, beta and gamma) and ACTH. The activity of this receptor is mediated by G proteins which activate adenylate cyclase. Mediates melanogenesis, the production of eumelanin (black/brown) and phaeomelanin (red/yellow), via regulation of cAMP signaling in melanocytes. This is Melanocyte-stimulating hormone receptor (MC1R) from Cervus elaphus (Red deer).